Consider the following 232-residue polypeptide: tRNA1(Val) (adenine(37)-N6)-methyltransferase (232 aa).

This sequence belongs to the methyltransferase superfamily. tRNA (adenine-N(6)-)-methyltransferase family.

It is found in the cytoplasm. The enzyme catalyses adenosine(37) in tRNA1(Val) + S-adenosyl-L-methionine = N(6)-methyladenosine(37) in tRNA1(Val) + S-adenosyl-L-homocysteine + H(+). In terms of biological role, specifically methylates the adenine in position 37 of tRNA(1)(Val) (anticodon cmo5UAC). The protein is tRNA1(Val) (adenine(37)-N6)-methyltransferase of Haemophilus influenzae (strain PittEE).